The chain runs to 235 residues: Pro-opiomelanocortin (235 aa).

Residues 1–26 (MPRFCYSRSGALLLALLLQTSIDVWS) form the signal peptide. Phe87 carries the post-translational modification Phenylalanine amide. Positions 88–126 (GPRNSSSAGSAAQRRAEEEAVWGDGSPEPSPREGKRSYS) are disordered. The segment covering 90-100 (RNSSSAGSAAQ) has biased composition (low complexity). An N-linked (GlcNAc...) asparagine glycan is attached at Asn91. Positions 103–121 (AEEEAVWGDGSPEPSPREG) are excised as a propeptide. Basic and acidic residues predominate over residues 117 to 126 (SPREGKRSYS). Position 124 is an N-acetylserine; in Corticotropin (Ser124). Position 136 is a valine amide (Val136). Asn152 carries N-linked (GlcNAc...) asparagine glycosylation. The residue at position 154 (Ser154) is a Phosphoserine. The disordered stretch occupies residues 179-210 (ESDAEKDDGPYRVEHFRWSNPPKDKRYGGFMT). Positions 185–205 (DDGPYRVEHFRWSNPPKDKRY) are enriched in basic and acidic residues.

The protein belongs to the POMC family. Post-translationally, specific enzymatic cleavages at paired basic residues yield the different active peptides. In terms of tissue distribution, ACTH and MSH are produced by the pituitary gland.

It is found in the secreted. Stimulates the adrenal glands to release cortisol. Functionally, anorexigenic peptide. Increases the pigmentation of skin by increasing melanin production in melanocytes. In terms of biological role, increases the pigmentation of skin by increasing melanin production in melanocytes. Its function is as follows. Endogenous orexigenic opiate. Endogenous opiate. The protein is Pro-opiomelanocortin (Pomc) of Mus musculus (Mouse).